Here is a 2258-residue protein sequence, read N- to C-terminus: Genome polyprotein 1 (2258 aa).

The 159-residue stretch at 439–597 (SMAQEAKQWS…AVRRYEIKTV (159 aa)) folds into the Helicase ATP-binding domain. Residue 487–494 (RAATVNVT) coordinates ATP. One can recognise a Helicase C-terminal domain in the interval 612-778 (DKENSLYVLQ…GVQFYINEHF (167 aa)). Position 1141 is an O-(5'-phospho-RNA)-tyrosine (Tyr-1141). Residues 1257–1476 (ATLEGMTMKP…TKPRNMQSAP (220 aa)) form the Peptidase C4 domain. Residues His-1302, Asp-1338, and Cys-1405 each act as for nuclear inclusion protein A activity in the active site. The RdRp catalytic domain maps to 1745–1869 (WTHGSGDGSR…AMSPSFMVKF (125 aa)). Disordered stretches follow at residues 2027–2047 (NMAA…RGTS) and 2233–2258 (TSEQ…ALLR). A compositionally biased stretch (basic and acidic residues) spans 2242–2258 (TETRRRNDYDGHEALLR).

This sequence belongs to the bymoviruses polyprotein 1 family. VPg is uridylylated by the polymerase and is covalently attached to the 5'-end of the genomic RNA. This uridylylated form acts as a nucleotide-peptide primer for the polymerase. In terms of processing, the viral RNA1 of bymoviruses is expressed as a single polyprotein which undergoes post-translational proteolytic processing by the main proteinase NIa-pro resulting in the production of at least eight individual proteins.

It is found in the host cytoplasmic vesicle. The protein resides in the virion. The catalysed reaction is RNA(n) + a ribonucleoside 5'-triphosphate = RNA(n+1) + diphosphate. It carries out the reaction Hydrolyzes glutaminyl bonds, and activity is further restricted by preferences for the amino acids in P6 - P1' that vary with the species of potyvirus, e.g. Glu-Xaa-Xaa-Tyr-Xaa-Gln-|-(Ser or Gly) for the enzyme from tobacco etch virus. The natural substrate is the viral polyprotein, but other proteins and oligopeptides containing the appropriate consensus sequence are also cleaved.. Its function is as follows. Indispensable for virus replication. Mediates the cap-independent, EIF4E-dependent translation of viral genomic RNAs. Binds to the cap-binding site of host EIF4E and thus interferes with the host EIF4E-dependent mRNA export and translation. VPg-RNA directly binds EIF4E and is a template for transcription. Also forms trimeric complexes with EIF4E-EIF4G, which are templates for translation. In terms of biological role, has RNA-binding and proteolytic activities. Functionally, an RNA-dependent RNA polymerase that plays an essential role in the virus replication. The protein is Genome polyprotein 1 of Barley mild mosaic virus (strain Na1) (BaMMV).